A 682-amino-acid chain; its full sequence is Potassium-transporting ATPase ATP-binding subunit (682 aa).

4 helical membrane passes run 34–54 (PVMF…LAMV), 58–78 (IAGS…TVLF), 219–239 (IALT…TATL), and 254–274 (VLVA…LSAI). The active-site 4-aspartylphosphate intermediate is Asp-307. Residues Asp-344, Glu-348, 377-384 (FTAQSRMS), and Lys-395 each bind ATP. Residues Asp-518 and Asp-522 each coordinate Mg(2+). 3 consecutive transmembrane segments (helical) span residues 588–608 (FAII…LNVM), 616–636 (AILS…PLAL), and 662–682 (LVVP…LGLA).

The protein belongs to the cation transport ATPase (P-type) (TC 3.A.3) family. Type IA subfamily. In terms of assembly, the system is composed of three essential subunits: KdpA, KdpB and KdpC.

It is found in the cell inner membrane. It catalyses the reaction K(+)(out) + ATP + H2O = K(+)(in) + ADP + phosphate + H(+). In terms of biological role, part of the high-affinity ATP-driven potassium transport (or Kdp) system, which catalyzes the hydrolysis of ATP coupled with the electrogenic transport of potassium into the cytoplasm. This subunit is responsible for energy coupling to the transport system and for the release of the potassium ions to the cytoplasm. The chain is Potassium-transporting ATPase ATP-binding subunit from Salmonella paratyphi A (strain ATCC 9150 / SARB42).